The sequence spans 739 residues: Protein NPGR2 (739 aa).

Residues 32 to 71 (EQMRHREEEDKKSEVGVGRDYNGSSALSTAESENAKKLDN) form a disordered region. The segment covering 33–45 (QMRHREEEDKKSE) has biased composition (basic and acidic residues). Positions 53–63 (NGSSALSTAES) are enriched in polar residues. TPR repeat units follow at residues 90–127 (EEAR…KMKT), 162–195 (FEAI…VETS), 215–248 (TKAV…HWKL), 465–498 (PRVV…GAES), 500–533 (LEVW…TGKW), 536–569 (GKLL…LQVQ), 592–625 (LGTW…APYS), 626–659 (SVRY…DPMH), and 697–733 (HSAW…EETM).

As to quaternary structure, interacts with calmodulin in a calcium-dependent manner. Expressed in pollen, flowers and fruits.

This Arabidopsis thaliana (Mouse-ear cress) protein is Protein NPGR2.